The sequence spans 330 residues: Ketol-acid reductoisomerase (NADP(+)) (330 aa).

Residues 1–181 (MNVYYEQDAD…GGAKAGVIET (181 aa)) form the KARI N-terminal Rossmann domain. NADP(+)-binding positions include 24–27 (YGSQ), Arg47, Ser50, Ser52, and 82–85 (DQYQ). The active site involves His107. Residue Gly133 coordinates NADP(+). Positions 182–327 (TIKNETETDL…AKLRNMMSWL (146 aa)) constitute a KARI C-terminal knotted domain. Residues Asp190, Glu194, Glu226, and Glu230 each contribute to the Mg(2+) site. Ser251 is a substrate binding site.

Belongs to the ketol-acid reductoisomerase family. The cofactor is Mg(2+).

The catalysed reaction is (2R)-2,3-dihydroxy-3-methylbutanoate + NADP(+) = (2S)-2-acetolactate + NADPH + H(+). It carries out the reaction (2R,3R)-2,3-dihydroxy-3-methylpentanoate + NADP(+) = (S)-2-ethyl-2-hydroxy-3-oxobutanoate + NADPH + H(+). It functions in the pathway amino-acid biosynthesis; L-isoleucine biosynthesis; L-isoleucine from 2-oxobutanoate: step 2/4. The protein operates within amino-acid biosynthesis; L-valine biosynthesis; L-valine from pyruvate: step 2/4. In terms of biological role, involved in the biosynthesis of branched-chain amino acids (BCAA). Catalyzes an alkyl-migration followed by a ketol-acid reduction of (S)-2-acetolactate (S2AL) to yield (R)-2,3-dihydroxy-isovalerate. In the isomerase reaction, S2AL is rearranged via a Mg-dependent methyl migration to produce 3-hydroxy-3-methyl-2-ketobutyrate (HMKB). In the reductase reaction, this 2-ketoacid undergoes a metal-dependent reduction by NADPH to yield (R)-2,3-dihydroxy-isovalerate. This Chlorobium phaeovibrioides (strain DSM 265 / 1930) (Prosthecochloris vibrioformis (strain DSM 265)) protein is Ketol-acid reductoisomerase (NADP(+)).